The sequence spans 104 residues: Large ribosomal subunit protein eL30 (104 aa).

It belongs to the eukaryotic ribosomal protein eL30 family.

This is Large ribosomal subunit protein eL30 (RPL30) from Leishmania major.